The primary structure comprises 157 residues: SsrA-binding protein (157 aa).

The protein belongs to the SmpB family.

It is found in the cytoplasm. In terms of biological role, required for rescue of stalled ribosomes mediated by trans-translation. Binds to transfer-messenger RNA (tmRNA), required for stable association of tmRNA with ribosomes. tmRNA and SmpB together mimic tRNA shape, replacing the anticodon stem-loop with SmpB. tmRNA is encoded by the ssrA gene; the 2 termini fold to resemble tRNA(Ala) and it encodes a 'tag peptide', a short internal open reading frame. During trans-translation Ala-aminoacylated tmRNA acts like a tRNA, entering the A-site of stalled ribosomes, displacing the stalled mRNA. The ribosome then switches to translate the ORF on the tmRNA; the nascent peptide is terminated with the 'tag peptide' encoded by the tmRNA and targeted for degradation. The ribosome is freed to recommence translation, which seems to be the essential function of trans-translation. This is SsrA-binding protein from Chlorobaculum tepidum (strain ATCC 49652 / DSM 12025 / NBRC 103806 / TLS) (Chlorobium tepidum).